A 545-amino-acid chain; its full sequence is CTP synthase (545 aa).

The tract at residues 1-267 (MTKFIFVTGG…AEQTLKLLQM (267 aa)) is amidoligase domain. Serine 13 serves as a coordination point for CTP. Serine 13 serves as a coordination point for UTP. ATP-binding positions include 14–19 (SIGKGI) and aspartate 71. Mg(2+) is bound by residues aspartate 71 and glutamate 141. CTP contacts are provided by residues 148–150 (DIE), 188–193 (KTKPTQ), and lysine 224. Residues 188–193 (KTKPTQ) and lysine 224 contribute to the UTP site. Residues 292 to 534 (EIAIVGKYVS…VQAAIAQSHP (243 aa)) enclose the Glutamine amidotransferase type-1 domain. Glycine 354 serves as a coordination point for L-glutamine. Catalysis depends on cysteine 381, which acts as the Nucleophile; for glutamine hydrolysis. Residues 382-385 (LGMQ), glutamate 405, and arginine 462 each bind L-glutamine. Residues histidine 507 and glutamate 509 contribute to the active site.

The protein belongs to the CTP synthase family. In terms of assembly, homotetramer.

It catalyses the reaction UTP + L-glutamine + ATP + H2O = CTP + L-glutamate + ADP + phosphate + 2 H(+). It carries out the reaction L-glutamine + H2O = L-glutamate + NH4(+). The enzyme catalyses UTP + NH4(+) + ATP = CTP + ADP + phosphate + 2 H(+). It functions in the pathway pyrimidine metabolism; CTP biosynthesis via de novo pathway; CTP from UDP: step 2/2. With respect to regulation, allosterically activated by GTP, when glutamine is the substrate; GTP has no effect on the reaction when ammonia is the substrate. The allosteric effector GTP functions by stabilizing the protein conformation that binds the tetrahedral intermediate(s) formed during glutamine hydrolysis. Inhibited by the product CTP, via allosteric rather than competitive inhibition. Functionally, catalyzes the ATP-dependent amination of UTP to CTP with either L-glutamine or ammonia as the source of nitrogen. Regulates intracellular CTP levels through interactions with the four ribonucleotide triphosphates. The protein is CTP synthase of Trichormus variabilis (strain ATCC 29413 / PCC 7937) (Anabaena variabilis).